Here is a 511-residue protein sequence, read N- to C-terminus: Bifunctional purine biosynthesis protein PurH (511 aa).

The region spanning 1-145 (MKRRAIISVS…KNHAYVTAVV (145 aa)) is the MGS-like domain.

The protein belongs to the PurH family.

The enzyme catalyses (6R)-10-formyltetrahydrofolate + 5-amino-1-(5-phospho-beta-D-ribosyl)imidazole-4-carboxamide = 5-formamido-1-(5-phospho-D-ribosyl)imidazole-4-carboxamide + (6S)-5,6,7,8-tetrahydrofolate. It carries out the reaction IMP + H2O = 5-formamido-1-(5-phospho-D-ribosyl)imidazole-4-carboxamide. It participates in purine metabolism; IMP biosynthesis via de novo pathway; 5-formamido-1-(5-phospho-D-ribosyl)imidazole-4-carboxamide from 5-amino-1-(5-phospho-D-ribosyl)imidazole-4-carboxamide (10-formyl THF route): step 1/1. The protein operates within purine metabolism; IMP biosynthesis via de novo pathway; IMP from 5-formamido-1-(5-phospho-D-ribosyl)imidazole-4-carboxamide: step 1/1. In Anoxybacillus flavithermus (strain DSM 21510 / WK1), this protein is Bifunctional purine biosynthesis protein PurH.